The chain runs to 314 residues: tRNA pseudouridine synthase B (314 aa).

Position 43 (His-43) interacts with substrate. The active-site Nucleophile is Asp-48. Tyr-76, Tyr-179, and Leu-200 together coordinate substrate.

Belongs to the pseudouridine synthase TruB family. Type 1 subfamily.

The enzyme catalyses uridine(55) in tRNA = pseudouridine(55) in tRNA. Its function is as follows. Responsible for synthesis of pseudouridine from uracil-55 in the psi GC loop of transfer RNAs. This is tRNA pseudouridine synthase B from Salmonella arizonae (strain ATCC BAA-731 / CDC346-86 / RSK2980).